The following is a 213-amino-acid chain: Large ribosomal subunit protein uL1 (213 aa).

It belongs to the universal ribosomal protein uL1 family. In terms of assembly, part of the 50S ribosomal subunit.

Its function is as follows. Binds directly to 23S rRNA. Probably involved in E site tRNA release. Functionally, protein L1 is also a translational repressor protein, it controls the translation of its operon by binding to its mRNA. The sequence is that of Large ribosomal subunit protein uL1 from Methanocorpusculum labreanum (strain ATCC 43576 / DSM 4855 / Z).